Reading from the N-terminus, the 453-residue chain is Ribosome biogenesis protein YTM1 (453 aa).

The segment at 19–102 (VKVRFFTNEE…ETVIDLQYTR (84 aa)) is ubiquitin-like (UBL) domain. Residues 112–453 (SFTNEDWISS…KKIDIYREAN (342 aa)) are sufficient for interaction with ERB1 and association with 66S pre-ribosomes. 7 WD repeats span residues 128–166 (GHGA…ESQY), 168–206 (GHSG…VEEG), 218–257 (GHKG…MSAV), 292–332 (GHGQ…CVDT), 334–373 (STGF…STEQ), 380–420 (GHTN…AMYT), and 422–453 (GKGG…REAN).

This sequence belongs to the WD repeat WDR12/YTM1 family. Component of the NOP7 complex, composed of ERB1, NOP7 and YTM1. The complex is held together by ERB1, which interacts with NOP7 via its N-terminal domain and with YTM1 via a high-affinity interaction between the seven-bladed beta-propeller domains of the 2 proteins. The NOP7 complex associates with the 66S pre-ribosome. Interacts (via UBL domain) with MDN1 (via VWFA/MIDAS domain).

The protein localises to the nucleus. It is found in the nucleolus. The protein resides in the nucleoplasm. Component of the NOP7 complex, which is required for maturation of the 25S and 5.8S ribosomal RNAs and formation of the 60S ribosome. This chain is Ribosome biogenesis protein YTM1, found in Meyerozyma guilliermondii (strain ATCC 6260 / CBS 566 / DSM 6381 / JCM 1539 / NBRC 10279 / NRRL Y-324) (Yeast).